The primary structure comprises 361 residues: Alternative oxidase, mitochondrial (361 aa).

Residues 155–175 (LIRYVFLESVAGVPGMVAGML) form a helical membrane-spanning segment. Fe cation is bound by residues Glu-162, Glu-201, and His-204. Residues 221-241 (MILGAQGVFFNSFFLCYLFSP) form a helical membrane-spanning segment. Fe cation-binding residues include Glu-252, Glu-253, Glu-309, and His-312. The segment at 320-361 (GNLKQDEDPNPFVSEYGKERGEKPGKGIESLKPVGWERDEVI) is disordered. Residues 335 to 345 (YGKERGEKPGK) are compositionally biased toward basic and acidic residues.

Belongs to the alternative oxidase family. Fe cation serves as cofactor.

The protein resides in the mitochondrion inner membrane. Functionally, catalyzes cyanide-resistant oxygen consumption. May increase respiration when the cytochrome respiratory pathway is restricted, or in response to low temperatures. The polypeptide is Alternative oxidase, mitochondrial (aox) (Botryotinia fuckeliana (Noble rot fungus)).